The chain runs to 397 residues: Elongation factor Tu (397 aa).

Residues Lys10–Val207 enclose the tr-type G domain. Positions Gly19 to Thr26 are G1. Gly19 to Thr26 provides a ligand contact to GTP. Thr26 is a Mg(2+) binding site. The tract at residues Gly63–Asn67 is G2. Positions Asp84 to Gly87 are G3. Residues Asp84 to His88 and Asn139 to Asp142 each bind GTP. The interval Asn139–Asp142 is G4. Residues Ser177–Leu179 are G5.

The protein belongs to the TRAFAC class translation factor GTPase superfamily. Classic translation factor GTPase family. EF-Tu/EF-1A subfamily. In terms of assembly, monomer.

It localises to the cytoplasm. The catalysed reaction is GTP + H2O = GDP + phosphate + H(+). Functionally, GTP hydrolase that promotes the GTP-dependent binding of aminoacyl-tRNA to the A-site of ribosomes during protein biosynthesis. The chain is Elongation factor Tu from Clavibacter michiganensis subsp. michiganensis (strain NCPPB 382).